We begin with the raw amino-acid sequence, 260 residues long: Triosephosphate isomerase (260 aa).

11–13 (NWK) lines the substrate pocket. The Electrophile role is filled by His103. Glu175 (proton acceptor) is an active-site residue. Substrate-binding positions include Gly181, Ser220, and 241-242 (GG).

This sequence belongs to the triosephosphate isomerase family. In terms of assembly, homodimer.

The protein localises to the cytoplasm. The catalysed reaction is D-glyceraldehyde 3-phosphate = dihydroxyacetone phosphate. It participates in carbohydrate biosynthesis; gluconeogenesis. It functions in the pathway carbohydrate degradation; glycolysis; D-glyceraldehyde 3-phosphate from glycerone phosphate: step 1/1. Involved in the gluconeogenesis. Catalyzes stereospecifically the conversion of dihydroxyacetone phosphate (DHAP) to D-glyceraldehyde-3-phosphate (G3P). The protein is Triosephosphate isomerase of Shewanella frigidimarina (strain NCIMB 400).